A 297-amino-acid polypeptide reads, in one-letter code: Homoserine kinase (297 aa).

Position 82–92 (Pro82–Ala92) interacts with ATP.

This sequence belongs to the GHMP kinase family. Homoserine kinase subfamily.

It localises to the cytoplasm. It carries out the reaction L-homoserine + ATP = O-phospho-L-homoserine + ADP + H(+). It participates in amino-acid biosynthesis; L-threonine biosynthesis; L-threonine from L-aspartate: step 4/5. In terms of biological role, catalyzes the ATP-dependent phosphorylation of L-homoserine to L-homoserine phosphate. The chain is Homoserine kinase from Clostridium botulinum (strain Okra / Type B1).